Reading from the N-terminus, the 256-residue chain is Ubiquinone/menaquinone biosynthesis C-methyltransferase UbiE (256 aa).

Residues T78 and D99 each contribute to the S-adenosyl-L-methionine site.

This sequence belongs to the class I-like SAM-binding methyltransferase superfamily. MenG/UbiE family.

The enzyme catalyses a 2-demethylmenaquinol + S-adenosyl-L-methionine = a menaquinol + S-adenosyl-L-homocysteine + H(+). It carries out the reaction a 2-methoxy-6-(all-trans-polyprenyl)benzene-1,4-diol + S-adenosyl-L-methionine = a 5-methoxy-2-methyl-3-(all-trans-polyprenyl)benzene-1,4-diol + S-adenosyl-L-homocysteine + H(+). Its pathway is quinol/quinone metabolism; menaquinone biosynthesis; menaquinol from 1,4-dihydroxy-2-naphthoate: step 2/2. It participates in cofactor biosynthesis; ubiquinone biosynthesis. In terms of biological role, methyltransferase required for the conversion of demethylmenaquinol (DMKH2) to menaquinol (MKH2) and the conversion of 2-polyprenyl-6-methoxy-1,4-benzoquinol (DDMQH2) to 2-polyprenyl-3-methyl-6-methoxy-1,4-benzoquinol (DMQH2). In Geobacter sulfurreducens (strain ATCC 51573 / DSM 12127 / PCA), this protein is Ubiquinone/menaquinone biosynthesis C-methyltransferase UbiE.